The primary structure comprises 271 residues: 4-hydroxy-tetrahydrodipicolinate reductase (271 aa).

NAD(+) contacts are provided by residues Gly-11–Met-16 and Glu-37. Arg-38 serves as a coordination point for NADP(+). NAD(+) is bound by residues Gly-101–Thr-103 and Ala-125–Met-128. The active-site Proton donor/acceptor is the His-158. His-159 is a (S)-2,3,4,5-tetrahydrodipicolinate binding site. The Proton donor role is filled by Lys-162. Gly-168–Thr-169 contacts (S)-2,3,4,5-tetrahydrodipicolinate.

This sequence belongs to the DapB family.

The protein resides in the cytoplasm. The catalysed reaction is (S)-2,3,4,5-tetrahydrodipicolinate + NAD(+) + H2O = (2S,4S)-4-hydroxy-2,3,4,5-tetrahydrodipicolinate + NADH + H(+). It carries out the reaction (S)-2,3,4,5-tetrahydrodipicolinate + NADP(+) + H2O = (2S,4S)-4-hydroxy-2,3,4,5-tetrahydrodipicolinate + NADPH + H(+). It participates in amino-acid biosynthesis; L-lysine biosynthesis via DAP pathway; (S)-tetrahydrodipicolinate from L-aspartate: step 4/4. In terms of biological role, catalyzes the conversion of 4-hydroxy-tetrahydrodipicolinate (HTPA) to tetrahydrodipicolinate. The protein is 4-hydroxy-tetrahydrodipicolinate reductase of Shewanella piezotolerans (strain WP3 / JCM 13877).